The following is a 247-amino-acid chain: Aspartate/glutamate leucyltransferase (247 aa).

Belongs to the R-transferase family. Bpt subfamily.

Its subcellular location is the cytoplasm. The enzyme catalyses N-terminal L-glutamyl-[protein] + L-leucyl-tRNA(Leu) = N-terminal L-leucyl-L-glutamyl-[protein] + tRNA(Leu) + H(+). The catalysed reaction is N-terminal L-aspartyl-[protein] + L-leucyl-tRNA(Leu) = N-terminal L-leucyl-L-aspartyl-[protein] + tRNA(Leu) + H(+). Functionally, functions in the N-end rule pathway of protein degradation where it conjugates Leu from its aminoacyl-tRNA to the N-termini of proteins containing an N-terminal aspartate or glutamate. This chain is Aspartate/glutamate leucyltransferase, found in Dechloromonas aromatica (strain RCB).